The following is an 811-amino-acid chain: RFX-like DNA-binding protein RFX1 (811 aa).

2 disordered regions span residues 48-92 (EPTS…TYLP) and 111-156 (LLHQ…QRQP). The span at 51–70 (SRGSNDNSNGPSNGSSVNSN) shows a compositional bias: low complexity. The segment covering 140 to 149 (SPTPTQPPAQ) has biased composition (pro residues). Phosphoserine is present on S173. The tract at residues 181–222 (KSEETLNNNPPTAAKRTNTFPSIPSSTKKQKTSQEKRISSIS) is disordered. Residues 185–204 (TLNNNPPTAAKRTNTFPSIP) are compositionally biased toward polar residues. Residues 285-360 (ALLWLMKNCK…YHYCGLKLTV (76 aa)) constitute a DNA-binding region (RFX-type winged-helix). Over residues 377-391 (LVHNNDPISPLSSPS) the composition is skewed to low complexity. The interval 377–461 (LVHNNDPISP…AANNPTGTLS (85 aa)) is disordered. The span at 409–428 (NRKSLSRTGSPVKQSSNDNP) shows a compositional bias: polar residues. A compositionally biased stretch (basic and acidic residues) spans 434-445 (ESQHPNETEANK).

The protein belongs to the RFX family.

This Saccharomyces cerevisiae (strain ATCC 204508 / S288c) (Baker's yeast) protein is RFX-like DNA-binding protein RFX1 (RFX1).